The primary structure comprises 470 residues: Calcium-binding and coiled-coil domain-containing protein 2 (470 aa).

Positions 131 to 134 (ILLV) match the CLIR motif. A coiled-coil region spans residues 132–368 (LLVTTEEEAQ…QMEDLSYTLE (237 aa)). Residues 201 to 204 (QQNQ) carry the LIR-like motif. The segment at 441-464 (QMQCPECGSEFENFQVFQDHIFCH) adopts a UBZ1-type zinc-finger fold. Positions 444, 447, 460, and 464 each coordinate Zn(2+).

Belongs to the CALCOCO family.

The protein localises to the cytoplasm. The protein resides in the perinuclear region. It is found in the cytoskeleton. It localises to the cytoplasmic vesicle. Its subcellular location is the autophagosome membrane. In terms of biological role, xenophagy-specific receptor required for autophagy-mediated intracellular bacteria degradation. Acts as an effector protein of galectin-sensed membrane damage that restricts the proliferation of infecting pathogens upon entry into the cytosol by targeting galectin-associated bacteria for autophagy. Initially orchestrates bacteria targeting to autophagosomes and subsequently ensures pathogen degradation by regulating pathogen-containing autophagosome maturation. May play a role in ruffle formation and actin cytoskeleton organization and seems to negatively regulate constitutive secretion. The protein is Calcium-binding and coiled-coil domain-containing protein 2 of Xenopus tropicalis (Western clawed frog).